We begin with the raw amino-acid sequence, 347 residues long: Ceramide very long chain fatty acid hydroxylase scs7 (347 aa).

Residues 1–156 (MASVTSEKCV…GNFLEPLTKT (156 aa)) are Cytoplasmic-facing. The chain crosses the membrane as a helical span at residues 157–177 (PWYMIPLIWVPCVTYGFLYAC). Thr-178 is a topological domain (lumenal). A helical membrane pass occupies residues 179–199 (GIPFSVAITFFIIGLFTWTLV). Residues 200–238 (EYTMHRFLFHLDEYTPDHPIFLTMHFAFHGCHHFLPADK) lie on the Cytoplasmic side of the membrane. Zn(2+) is bound by residues His-204, His-209, His-228, His-231, and His-232. Residues 239-259 (YRLVMPPALFLIFATPWYHFI) traverse the membrane as a helical segment. Position 260 (Gln-260) is a topological domain, lumenal. A helical membrane pass occupies residues 261–281 (LVLPHYIGVAGFSGAILGYVF). At 282–347 (YDLTHYFLHH…EQGKISTKAK (66 aa)) the chain is on the cytoplasmic side. Residues His-286, His-290, His-306, His-309, and His-310 each coordinate Zn(2+).

It belongs to the sterol desaturase family. SCS7 subfamily. The cofactor is Zn(2+).

It localises to the endoplasmic reticulum membrane. The protein operates within sphingolipid metabolism. In terms of biological role, ceramide hydroxylase involved in the hydroxylation of sphingolipid-associated very long chain fatty acids. Postulated to hydroxylate the very long chain fatty acid of dihydroceramides and phytoceramides at C-2. The chain is Ceramide very long chain fatty acid hydroxylase scs7 from Schizosaccharomyces pombe (strain 972 / ATCC 24843) (Fission yeast).